Consider the following 628-residue polypeptide: uncharacterized protein (628 aa).

The protein belongs to the ATP-dependent AMP-binding enzyme family.

This is an uncharacterized protein from Pseudomonas aeruginosa (strain ATCC 15692 / DSM 22644 / CIP 104116 / JCM 14847 / LMG 12228 / 1C / PRS 101 / PAO1).